Reading from the N-terminus, the 179-residue chain is Large ribosomal subunit protein uL5 (179 aa).

The protein belongs to the universal ribosomal protein uL5 family. In terms of assembly, part of the 50S ribosomal subunit; part of the 5S rRNA/L5/L18/L25 subcomplex. Contacts the 5S rRNA and the P site tRNA. Forms a bridge to the 30S subunit in the 70S ribosome.

In terms of biological role, this is one of the proteins that bind and probably mediate the attachment of the 5S RNA into the large ribosomal subunit, where it forms part of the central protuberance. In the 70S ribosome it contacts protein S13 of the 30S subunit (bridge B1b), connecting the 2 subunits; this bridge is implicated in subunit movement. Contacts the P site tRNA; the 5S rRNA and some of its associated proteins might help stabilize positioning of ribosome-bound tRNAs. The protein is Large ribosomal subunit protein uL5 of Neisseria meningitidis serogroup A / serotype 4A (strain DSM 15465 / Z2491).